We begin with the raw amino-acid sequence, 288 residues long: ATP synthase subunit a (288 aa).

6 helical membrane passes run 47-67, 104-124, 157-177, 199-219, 237-257, and 258-278; these read LDSM…FWMV, LIAP…LMDL, DPNI…FYSI, PIVQ…TLIA, LIFI…SVPW, and AIFH…LTIV.

Belongs to the ATPase A chain family. As to quaternary structure, F-type ATPases have 2 components, CF(1) - the catalytic core - and CF(0) - the membrane proton channel. CF(1) has five subunits: alpha(3), beta(3), gamma(1), delta(1), epsilon(1). CF(0) has three main subunits: a(1), b(2) and c(9-12). The alpha and beta chains form an alternating ring which encloses part of the gamma chain. CF(1) is attached to CF(0) by a central stalk formed by the gamma and epsilon chains, while a peripheral stalk is formed by the delta and b chains.

Its subcellular location is the cell inner membrane. Functionally, key component of the proton channel; it plays a direct role in the translocation of protons across the membrane. The sequence is that of ATP synthase subunit a from Psychrobacter arcticus (strain DSM 17307 / VKM B-2377 / 273-4).